A 463-amino-acid polypeptide reads, in one-letter code: ATP synthase subunit beta 1 (463 aa).

Residue 152–159 (GGAGVGKT) coordinates ATP.

The protein belongs to the ATPase alpha/beta chains family. F-type ATPases have 2 components, CF(1) - the catalytic core - and CF(0) - the membrane proton channel. CF(1) has five subunits: alpha(3), beta(3), gamma(1), delta(1), epsilon(1). CF(0) has three main subunits: a(1), b(2) and c(9-12). The alpha and beta chains form an alternating ring which encloses part of the gamma chain. CF(1) is attached to CF(0) by a central stalk formed by the gamma and epsilon chains, while a peripheral stalk is formed by the delta and b chains.

It localises to the cell inner membrane. The catalysed reaction is ATP + H2O + 4 H(+)(in) = ADP + phosphate + 5 H(+)(out). Produces ATP from ADP in the presence of a proton gradient across the membrane. The catalytic sites are hosted primarily by the beta subunits. The protein is ATP synthase subunit beta 1 of Shewanella frigidimarina (strain NCIMB 400).